Consider the following 355-residue polypeptide: DNA polymerase IV (355 aa).

The 182-residue stretch at 7-188 (IIHIDMDCFY…LPVRKLFGVG (182 aa)) folds into the UmuC domain. Mg(2+) is bound by residues aspartate 11 and aspartate 106. The active site involves glutamate 107.

It belongs to the DNA polymerase type-Y family. As to quaternary structure, monomer. Mg(2+) is required as a cofactor.

The protein resides in the cytoplasm. The catalysed reaction is DNA(n) + a 2'-deoxyribonucleoside 5'-triphosphate = DNA(n+1) + diphosphate. Poorly processive, error-prone DNA polymerase involved in untargeted mutagenesis. Copies undamaged DNA at stalled replication forks, which arise in vivo from mismatched or misaligned primer ends. These misaligned primers can be extended by PolIV. Exhibits no 3'-5' exonuclease (proofreading) activity. May be involved in translesional synthesis, in conjunction with the beta clamp from PolIII. The chain is DNA polymerase IV from Legionella pneumophila (strain Paris).